Reading from the N-terminus, the 311-residue chain is Thioredoxin reductase (311 aa).

33–43 (EGFFSGISGGQ) lines the FAD pocket. Cys138 and Cys141 are joined by a disulfide. 283-292 (DVQDKYYRQA) is an FAD binding site.

Belongs to the class-II pyridine nucleotide-disulfide oxidoreductase family. As to quaternary structure, homodimer. Requires FAD as cofactor.

Its subcellular location is the cytoplasm. The catalysed reaction is [thioredoxin]-dithiol + NADP(+) = [thioredoxin]-disulfide + NADPH + H(+). The polypeptide is Thioredoxin reductase (trxB) (Chlamydia pneumoniae (Chlamydophila pneumoniae)).